Here is a 57-residue protein sequence, read N- to C-terminus: Small nuclear protein PRAC1 (57 aa).

The disordered stretch occupies residues 38-57 (RSDGSACNSGISGGRGRKIP).

In terms of tissue distribution, highly expressed in prostate, rectum, and distal colon, and weakly expressed in bladder. Expressed in prostate cancer cell lines.

The protein localises to the nucleus. In Homo sapiens (Human), this protein is Small nuclear protein PRAC1 (PRAC1).